Consider the following 34-residue polypeptide: Thermomycolin (34 aa).

S33 serves as the catalytic Charge relay system.

Belongs to the peptidase S8 family.

It is found in the secreted. It carries out the reaction Rather non-specific hydrolysis of proteins. Preferential cleavage: -Ala-|-Xaa-, -Tyr-|-Xaa-, -Phe-|-Xaa- in small molecular substrates.. Functionally, this is an extracellular proteinase with a general specificity for apolar residues. This Malbranchea cinnamomea (Thermophilic fungus) protein is Thermomycolin.